Reading from the N-terminus, the 183-residue chain is MEAQSATETQKNLKTLMELIKTKRPFKSSDFDTLNLDYLSGQSNEELFKLLIDAINGMKENVAKVNEYLTEEGDHSLSGDELLKFVYKELVYDDESEFDKEKLQKLYKTFSEDSNAFATLQSYIQYLQPEENSQRWIQVHEPVKHRRRLNHNPALRVASPTEQSRCPISRRVVWIPSSVLNPQ.

The sequence is that of Gene BABR protein 2 from Babesia bovis.